Reading from the N-terminus, the 184-residue chain is Ribosome-recycling factor (184 aa).

A disordered region spans residues 141 to 161 (KKNDKAISEDDQRKGQDDVQK).

Belongs to the RRF family.

It localises to the cytoplasm. In terms of biological role, responsible for the release of ribosomes from messenger RNA at the termination of protein biosynthesis. May increase the efficiency of translation by recycling ribosomes from one round of translation to another. This is Ribosome-recycling factor from Solidesulfovibrio magneticus (strain ATCC 700980 / DSM 13731 / RS-1) (Desulfovibrio magneticus).